Here is a 225-residue protein sequence, read N- to C-terminus: 2-amino-5-formylamino-6-ribosylaminopyrimidin-4(3H)-one 5'-monophosphate deformylase (225 aa).

Residues Glu-28, His-30, Asp-39, and His-107 each contribute to the Fe cation site.

It belongs to the creatininase superfamily. FAPy deformylase family. As to quaternary structure, homodimer. Fe(2+) serves as cofactor. Requires Zn(2+) as cofactor.

The catalysed reaction is 2-amino-5-formylamino-6-(5-phospho-D-ribosylamino)pyrimidin-4(3H)-one + H2O = 2,5-diamino-6-(1-D-ribosylamino)pyrimidin-4(3H)-one 5'-phosphate + formate + H(+). The protein operates within cofactor biosynthesis; coenzyme F420 biosynthesis. Its pathway is cofactor biosynthesis; riboflavin biosynthesis. In terms of biological role, catalyzes the hydrolysis of the formamide of 2-amino-5-formylamino-6-ribosylamino-4(3H)-pyrimidinone 5'-monophosphate (FAPy) to form 2,5-diamino-6-ribosylamino-4(3H)-pyrimidinone 5'-phosphate (APy). The polypeptide is 2-amino-5-formylamino-6-ribosylaminopyrimidin-4(3H)-one 5'-monophosphate deformylase (Methanocaldococcus sp. (strain FS406-22)).